We begin with the raw amino-acid sequence, 226 residues long: Late protein I226R (226 aa).

Residues 1-16 (MKMETFLVCLFHNAAG) form the signal peptide. Asparagine 164 carries N-linked (GlcNAc...) asparagine; by host glycosylation.

Belongs to the asfivirus I226R family.

Functionally, plays a role in the inhibition of host NF-kappa-B and IRF3 signaling pathways. Mechanistically, promotes the degradation of host IKBKG through enhancing its ubiquitination leading to inhibition of both pathways. The sequence is that of Late protein I226R from African swine fever virus (isolate Pig/Kenya/KEN-50/1950) (ASFV).